A 286-amino-acid polypeptide reads, in one-letter code: MKLKAYAKINLALDVLSKREDGYHEIRTIMQTVDLYDIINIEKIEEDNIIVTTSSENIPTDNKNHAYIAASLLKERFGVKQGVRIHIEKNIPVSAGLAGGSTDAAAVLKGLNEIFELNLSEQQLMEIGREIGADVPFCLVGGTALCEGIGEKVIKLKSAPQMNILIAKPEVYVSTQAVYEALDLSKIKKRPNIEAMISAIEEGNVKEIAKNLCNVLEVVTVNQYPVINRVKDIMRNNNALGTVMTGSGPAVFGIFGNKYNALKAAERLKVFIKEIILTTTCEGSGF.

Residue Lys-8 is part of the active site. 92–102 (PVSAGLAGGST) is an ATP binding site. Asp-134 is a catalytic residue.

The protein belongs to the GHMP kinase family. IspE subfamily.

The catalysed reaction is 4-CDP-2-C-methyl-D-erythritol + ATP = 4-CDP-2-C-methyl-D-erythritol 2-phosphate + ADP + H(+). It participates in isoprenoid biosynthesis; isopentenyl diphosphate biosynthesis via DXP pathway; isopentenyl diphosphate from 1-deoxy-D-xylulose 5-phosphate: step 3/6. In terms of biological role, catalyzes the phosphorylation of the position 2 hydroxy group of 4-diphosphocytidyl-2C-methyl-D-erythritol. The protein is 4-diphosphocytidyl-2-C-methyl-D-erythritol kinase of Caldicellulosiruptor bescii (strain ATCC BAA-1888 / DSM 6725 / KCTC 15123 / Z-1320) (Anaerocellum thermophilum).